The sequence spans 139 residues: Flagellar assembly factor FliW 2 (139 aa).

Belongs to the FliW family. Interacts with translational regulator CsrA and flagellin(s).

It localises to the cytoplasm. Functionally, acts as an anti-CsrA protein, binds CsrA and prevents it from repressing translation of its target genes, one of which is flagellin. Binds to flagellin and participates in the assembly of the flagellum. The polypeptide is Flagellar assembly factor FliW 2 (Helicobacter hepaticus (strain ATCC 51449 / 3B1)).